The primary structure comprises 377 residues: 5-hydroxytryptamine receptor 1D (377 aa).

Residues Asn-5, Asn-17, and Asn-21 are each glycosylated (N-linked (GlcNAc...) asparagine). 3 helical membrane passes run 39 to 64 (ISLALLLSIITMATALSNAFVLTTIF), 76 to 97 (LIGSLAMTDLLVSILVMPISIA), and 110 to 134 (LCDIWLSSDITCCTASILHLCVIAL). A disulfide bridge connects residues Cys-111 and Cys-188. Residues Asp-118 and Cys-122 each coordinate serotonin. The DRY motif; important for ligand-induced conformation changes signature appears at 135-137 (DRY). 4 helical membrane passes run 155 to 176 (AAVMIATVWVISICISIPPLFW), 195 to 218 (ISYTIYSTCGAFYIPSVLLIILYG), 301 to 326 (KTLGIILGAFIVCWLPFFVASLVLPI), and 336 to 359 (ALFDFFTWLGYLNSLINPIIYTVF). Ser-321 serves as a coordination point for serotonin. Positions 352 to 356 (NPIIY) match the NPxxY motif; important for ligand-induced conformation changes and signaling motif.

The protein belongs to the G-protein coupled receptor 1 family. As to quaternary structure, homodimer. Heterodimer with HTR1B.

It is found in the cell membrane. In terms of biological role, G-protein coupled receptor for 5-hydroxytryptamine (serotonin). Also functions as a receptor for ergot alkaloid derivatives, various anxiolytic and antidepressant drugs and other psychoactive substances. Ligand binding causes a conformation change that triggers signaling via guanine nucleotide-binding proteins (G proteins) and modulates the activity of downstream effectors, such as adenylate cyclase. HTR1D is coupled to G(i)/G(o) G alpha proteins and mediates inhibitory neurotransmission by inhibiting adenylate cyclase activity. Regulates the release of 5-hydroxytryptamine in the brain, and thereby affects neural activity. May also play a role in regulating the release of other neurotransmitters. May play a role in vasoconstriction. This Canis lupus familiaris (Dog) protein is 5-hydroxytryptamine receptor 1D (HTR1D).